The sequence spans 498 residues: ATP synthase subunit beta, chloroplastic (498 aa).

At Thr6 the chain carries Phosphothreonine. Position 13 is a phosphoserine (Ser13). 172 to 179 (GGAGVGKT) lines the ATP pocket.

It belongs to the ATPase alpha/beta chains family. As to quaternary structure, F-type ATPases have 2 components, CF(1) - the catalytic core - and CF(0) - the membrane proton channel. CF(1) has five subunits: alpha(3), beta(3), gamma(1), delta(1), epsilon(1). CF(0) has four main subunits: a(1), b(1), b'(1) and c(9-12).

Its subcellular location is the plastid. It localises to the chloroplast thylakoid membrane. The catalysed reaction is ATP + H2O + 4 H(+)(in) = ADP + phosphate + 5 H(+)(out). Functionally, produces ATP from ADP in the presence of a proton gradient across the membrane. The catalytic sites are hosted primarily by the beta subunits. The polypeptide is ATP synthase subunit beta, chloroplastic (Capsella bursa-pastoris (Shepherd's purse)).